The following is a 157-amino-acid chain: Phosphopantetheine adenylyltransferase (157 aa).

S8 serves as a coordination point for substrate. Residues 8 to 9 (SF) and H16 contribute to the ATP site. The substrate site is built by K40, T72, and R86. Residues 87-89 (GLR), E97, and 122-128 (HSFLSSS) contribute to the ATP site.

This sequence belongs to the bacterial CoaD family. In terms of assembly, homohexamer. The cofactor is Mg(2+).

It localises to the cytoplasm. The enzyme catalyses (R)-4'-phosphopantetheine + ATP + H(+) = 3'-dephospho-CoA + diphosphate. It functions in the pathway cofactor biosynthesis; coenzyme A biosynthesis; CoA from (R)-pantothenate: step 4/5. Functionally, reversibly transfers an adenylyl group from ATP to 4'-phosphopantetheine, yielding dephospho-CoA (dPCoA) and pyrophosphate. This chain is Phosphopantetheine adenylyltransferase, found in Prochlorococcus marinus (strain MIT 9303).